The primary structure comprises 468 residues: Spliceosome-associated protein CWC27 homolog (468 aa).

N-acetylserine is present on serine 2. Positions 11–166 (TNGKVLLKTT…NPHRIKSCEV (156 aa)) constitute a PPIase cyclophilin-type domain. 2 disordered regions span residues 204–382 (LLSF…EDQT) and 427–468 (RKVK…KERR). Residues 206 to 229 (SFGEEAEEEEEEVNRVSQSMKGRS) are a coiled coil. Residues 231-241 (SSHDLLKDDPH) show a composition bias toward basic and acidic residues. Acidic residues predominate over residues 256 to 268 (TGDLEDDAEDDSV). 2 stretches are compositionally biased toward basic and acidic residues: residues 269–287 (EHDG…ERIA) and 302–342 (GDGE…AEKG). Serine 273 carries the phosphoserine modification. Residues 309–342 (ASRSEELRKEARQLKRELLAAKQKKESATKAEKG) are a coiled coil. The residue at position 343 (serine 343) is a Phosphoserine. Composition is skewed to basic and acidic residues over residues 356–368 (EYRR…EALR) and 453–468 (RREE…KERR).

It belongs to the cyclophilin-type PPIase family. In terms of assembly, part of the activated spliceosome B/catalytic step 1 spliceosome, one of the forms of the spliceosome which has a well-formed active site but still cannot catalyze the branching reaction and is composed at least of 52 proteins, the U2, U5 and U6 snRNAs and the pre-mRNA. Recruited during early steps of activated spliceosome B maturation, it is probably one of the first proteins released from this complex as he matures to the spliceosome C complex. Component of the minor spliceosome, which splices U12-type introns.

The protein localises to the nucleus. As part of the spliceosome, plays a role in pre-mRNA splicing. Probable inactive PPIase with no peptidyl-prolyl cis-trans isomerase activity. As a component of the minor spliceosome, involved in the splicing of U12-type introns in pre-mRNAs. In Rattus norvegicus (Rat), this protein is Spliceosome-associated protein CWC27 homolog.